The following is a 503-amino-acid chain: Aminoaldehyde dehydrogenase 2, peroxisomal (503 aa).

Na(+) contacts are provided by Ile-28, Asp-99, and Leu-189. Residue 238–245 coordinates NAD(+); the sequence is GSTMTGSK. Catalysis depends on Glu-260, which acts as the Proton acceptor. Residues Cys-294 and Glu-393 each contribute to the NAD(+) site. The active-site Nucleophile is the Cys-294. A Microbody targeting signal motif is present at residues 501–503; sequence SKL.

It belongs to the aldehyde dehydrogenase family. As to expression, expressed in leaves, flowers and fruits.

Its subcellular location is the peroxisome. It catalyses the reaction 4-aminobutanal + NAD(+) + H2O = 4-aminobutanoate + NADH + 2 H(+). The enzyme catalyses 3-aminopropanal + NAD(+) + H2O = beta-alanine + NADH + 2 H(+). Its pathway is amine and polyamine biosynthesis; betaine biosynthesis via choline pathway; betaine from betaine aldehyde: step 1/1. Functionally, dehydrogenase that catalyzes the oxidation of several aminoaldehydes. Metabolizes and detoxifies aldehyde products of polyamine degradation to non-toxic amino acids. Catalyzes the oxidation of 4-aminobutanal and 3-aminopropanal to 4-aminobutanoate and beta-alanine, respectively. This is Aminoaldehyde dehydrogenase 2, peroxisomal from Malus domestica (Apple).